A 149-amino-acid polypeptide reads, in one-letter code: Small ribosomal subunit protein bS16 (149 aa).

Positions 115-149 are disordered; that stretch reads KLKAAKSEADAKAKAEAEAAATEEAPAEEPAAEAE. Residues 119 to 131 are compositionally biased toward basic and acidic residues; sequence AKSEADAKAKAEA. Positions 139-149 are enriched in acidic residues; that stretch reads APAEEPAAEAE.

It belongs to the bacterial ribosomal protein bS16 family.

The protein is Small ribosomal subunit protein bS16 of Bifidobacterium adolescentis (strain ATCC 15703 / DSM 20083 / NCTC 11814 / E194a).